The primary structure comprises 297 residues: Pyrroline-5-carboxylate reductase 1 (297 aa).

Belongs to the pyrroline-5-carboxylate reductase family.

It is found in the cytoplasm. It catalyses the reaction L-proline + NADP(+) = (S)-1-pyrroline-5-carboxylate + NADPH + 2 H(+). It carries out the reaction L-proline + NAD(+) = (S)-1-pyrroline-5-carboxylate + NADH + 2 H(+). It functions in the pathway amino-acid biosynthesis; L-proline biosynthesis; L-proline from L-glutamate 5-semialdehyde: step 1/1. Functionally, catalyzes the reduction of 1-pyrroline-5-carboxylate (PCA) to L-proline. The sequence is that of Pyrroline-5-carboxylate reductase 1 (proH) from Bacillus spizizenii (strain ATCC 23059 / NRRL B-14472 / W23) (Bacillus subtilis subsp. spizizenii).